Here is a 119-residue protein sequence, read N- to C-terminus: Beta-2-microglobulin (119 aa).

An N-terminal signal peptide occupies residues 1–20; the sequence is MARFVVVALLVQLSLFGLEA. The Ig-like C1-type domain maps to 25–114; sequence PKIQVYSRYP…VTFSTPKTVK (90 aa). Residues Cys45 and Cys100 are joined by a disulfide bond.

The protein belongs to the beta-2-microglobulin family. Heterodimer of an alpha chain and a beta chain. Beta-2-microglobulin is the beta-chain of major histocompatibility complex class I molecules.

The protein resides in the secreted. Functionally, component of the class I major histocompatibility complex (MHC). Involved in the presentation of peptide antigens to the immune system. The protein is Beta-2-microglobulin (B2M) of Saguinus imperator (Emperor tamarin).